Here is a 502-residue protein sequence, read N- to C-terminus: ATP synthase subunit alpha (502 aa).

Gly169–Thr176 contacts ATP.

The protein belongs to the ATPase alpha/beta chains family. F-type ATPases have 2 components, CF(1) - the catalytic core - and CF(0) - the membrane proton channel. CF(1) has five subunits: alpha(3), beta(3), gamma(1), delta(1), epsilon(1). CF(0) has three main subunits: a(1), b(2) and c(9-12). The alpha and beta chains form an alternating ring which encloses part of the gamma chain. CF(1) is attached to CF(0) by a central stalk formed by the gamma and epsilon chains, while a peripheral stalk is formed by the delta and b chains.

Its subcellular location is the cell inner membrane. The enzyme catalyses ATP + H2O + 4 H(+)(in) = ADP + phosphate + 5 H(+)(out). Its function is as follows. Produces ATP from ADP in the presence of a proton gradient across the membrane. The alpha chain is a regulatory subunit. In Geotalea uraniireducens (strain Rf4) (Geobacter uraniireducens), this protein is ATP synthase subunit alpha.